A 398-amino-acid polypeptide reads, in one-letter code: Bifunctional enzyme IspD/IspF (398 aa).

A 2-C-methyl-D-erythritol 4-phosphate cytidylyltransferase region spans residues 1-234 (MTNSPRTAAI…SRLMAALGDI (234 aa)). The interval 235 to 398 (RTGTGYDVHA…LPWGADGLAG (164 aa)) is 2-C-methyl-D-erythritol 2,4-cyclodiphosphate synthase. Positions 241 and 243 each coordinate a divalent metal cation. 4-CDP-2-C-methyl-D-erythritol 2-phosphate contacts are provided by residues 241 to 243 (DVH) and 267 to 268 (HS). An a divalent metal cation-binding site is contributed by His275. 4-CDP-2-C-methyl-D-erythritol 2-phosphate is bound by residues 289–291 (DIG), 365–368 (TTSE), Phe372, and Arg375.

The protein in the N-terminal section; belongs to the IspD/TarI cytidylyltransferase family. IspD subfamily. In the C-terminal section; belongs to the IspF family. It depends on a divalent metal cation as a cofactor.

The catalysed reaction is 2-C-methyl-D-erythritol 4-phosphate + CTP + H(+) = 4-CDP-2-C-methyl-D-erythritol + diphosphate. The enzyme catalyses 4-CDP-2-C-methyl-D-erythritol 2-phosphate = 2-C-methyl-D-erythritol 2,4-cyclic diphosphate + CMP. It functions in the pathway isoprenoid biosynthesis; isopentenyl diphosphate biosynthesis via DXP pathway; isopentenyl diphosphate from 1-deoxy-D-xylulose 5-phosphate: step 2/6. Its pathway is isoprenoid biosynthesis; isopentenyl diphosphate biosynthesis via DXP pathway; isopentenyl diphosphate from 1-deoxy-D-xylulose 5-phosphate: step 4/6. Its function is as follows. Bifunctional enzyme that catalyzes the formation of 4-diphosphocytidyl-2-C-methyl-D-erythritol from CTP and 2-C-methyl-D-erythritol 4-phosphate (MEP) (IspD), and catalyzes the conversion of 4-diphosphocytidyl-2-C-methyl-D-erythritol 2-phosphate (CDP-ME2P) to 2-C-methyl-D-erythritol 2,4-cyclodiphosphate (ME-CPP) with a corresponding release of cytidine 5-monophosphate (CMP) (IspF). The polypeptide is Bifunctional enzyme IspD/IspF (Rhodopseudomonas palustris (strain TIE-1)).